A 429-amino-acid chain; its full sequence is Formate-dependent phosphoribosylglycinamide formyltransferase (429 aa).

Residues 26 to 27 (EL) and glutamate 86 each bind N(1)-(5-phospho-beta-D-ribosyl)glycinamide. ATP-binding positions include arginine 118, lysine 159, 199-202 (EEHI), and glutamate 207. One can recognise an ATP-grasp domain in the interval 123–319 (ETLVKEAKVP…EFGLHLRAVL (197 aa)). 2 residues coordinate Mg(2+): glutamate 276 and glutamate 288. N(1)-(5-phospho-beta-D-ribosyl)glycinamide contacts are provided by residues aspartate 295, lysine 375, and 382-383 (RR).

It belongs to the PurK/PurT family. Homodimer.

It catalyses the reaction N(1)-(5-phospho-beta-D-ribosyl)glycinamide + formate + ATP = N(2)-formyl-N(1)-(5-phospho-beta-D-ribosyl)glycinamide + ADP + phosphate + H(+). It participates in purine metabolism; IMP biosynthesis via de novo pathway; N(2)-formyl-N(1)-(5-phospho-D-ribosyl)glycinamide from N(1)-(5-phospho-D-ribosyl)glycinamide (formate route): step 1/1. Functionally, involved in the de novo purine biosynthesis. Catalyzes the transfer of formate to 5-phospho-ribosyl-glycinamide (GAR), producing 5-phospho-ribosyl-N-formylglycinamide (FGAR). Formate is provided by PurU via hydrolysis of 10-formyl-tetrahydrofolate. This Pyrococcus abyssi (strain GE5 / Orsay) protein is Formate-dependent phosphoribosylglycinamide formyltransferase.